We begin with the raw amino-acid sequence, 333 residues long: Transcription factor HHO6 (333 aa).

The 61-residue stretch at 189–249 folds into the HTH myb-type domain; sequence ALRKQRRCWN…HLQKYRLHIR (61 aa). The H-T-H motif DNA-binding region spans 220–245; it reads PKQIREHMQEEGLTNDEVKSHLQKYR. A disordered region spans residues 274–333; the sequence is DEEETCEGGESLKRSNAQSDSPQGPLQLPSTTTTTGGDSSMEDVEDAKSESFQLERLRSP. A compositionally biased stretch (polar residues) spans 287 to 303; the sequence is RSNAQSDSPQGPLQLPS. Over residues 319 to 333 the composition is skewed to basic and acidic residues; it reads DAKSESFQLERLRSP.

It is found in the nucleus. Probable transcription factor involved in phosphate signaling in roots. In Arabidopsis thaliana (Mouse-ear cress), this protein is Transcription factor HHO6.